The primary structure comprises 296 residues: AUGMIN subunit 2 (296 aa).

Coiled-coil stretches lie at residues 56 to 83 (DDLI…QGRK) and 253 to 285 (AVHK…NRRL). A disordered region spans residues 218–296 (AVSLPTTPGG…WPPSVKKSSV (79 aa)). Acidic residues predominate over residues 264 to 277 (QNEEEEEEEEEEDG).

It belongs to the HAUS2 family. As to quaternary structure, part of the augmin complex composed of 8 subunits. The complex acts on microtubules and interacts with gamma-tubulin in spindles and the phragmoplast.

In terms of biological role, contributes to the assembly of the acentrosomal spindle and phragmoplast microtubule arrays as part of the augmin complex. This is AUGMIN subunit 2 from Arabidopsis thaliana (Mouse-ear cress).